Reading from the N-terminus, the 290-residue chain is Uridine diphosphate glucose pyrophosphatase NUDT22 (290 aa).

Substrate-binding residues include F56, Y87, R139, A144, D151, H156, and E158. Residues 118 to 285 (ADPLGVGAAL…KGAIFLYNRV (168 aa)) form the Nudix hydrolase domain. The Nudix box motif lies at 175 to 196 (GELVVHELFSSVLQEICDEVNV). Mg(2+)-binding residues include E189 and E193. S274 lines the substrate pocket.

Belongs to the Nudix family. It depends on Mg(2+) as a cofactor.

It carries out the reaction UDP-sugar + H2O = UMP + alpha-D-aldose 1-phosphate.. Functionally, hydrolyzes UDP-glucose to glucose 1-phosphate and UMP and UDP-galactose to galactose 1-phosphate and UMP. Preferred substrate is UDP-glucose. The chain is Uridine diphosphate glucose pyrophosphatase NUDT22 (NUDT22) from Bos taurus (Bovine).